A 155-amino-acid chain; its full sequence is Protein FAM163B (155 aa).

Residues 6 to 26 traverse the membrane as a helical segment; that stretch reads VVITGGILATVILLCIIAVLC.

It belongs to the FAM163 family.

It is found in the membrane. The chain is Protein FAM163B (fam163b) from Xenopus tropicalis (Western clawed frog).